Consider the following 1959-residue polypeptide: Sodium channel protein type 10 subunit alpha (1959 aa).

Over 1–125 the chain is Cytoplasmic; it reads MEFPIGSVGT…FNLIRRTAIK (125 aa). Residues 30 to 53 are disordered; sequence AHGAAKKARAKHGERKGQDEKPRP. The span at 33–43 shows a compositional bias: basic residues; it reads AAKKARAKHGE. A compositionally biased stretch (basic and acidic residues) spans 44-53; the sequence is RKGQDEKPRP. The I repeat unit spans residues 116–404; that stretch reads FNLIRRTAIK…VTMAYEEQNQ (289 aa). The helical transmembrane segment at 126 to 149 threads the bilayer; the sequence is VSVHAWFSIFITITILFNCVCMTQ. Over 150–154 the chain is Extracellular; the sequence is NDLPE. A helical transmembrane segment spans residues 155 to 174; sequence KIEYAFTVIYTFEALIKILA. Over 175–187 the chain is Cytoplasmic; that stretch reads RGFCLNEFTYLRD. Residues 188–206 traverse the membrane as a helical segment; that stretch reads PWNWLDFSVITLAYVGAAI. The Extracellular segment spans residues 207–212; sequence DLRGIS. Residues 213–232 traverse the membrane as a helical; Voltage-sensor segment; that stretch reads GLRTFRVLRALKTVSVIPGL. The Cytoplasmic segment spans residues 233 to 248; the sequence is KVIVGALIHSVRKLAD. Residues 249–272 form a helical membrane-spanning segment; it reads VTILTVFCLSVFALVGLQLFKGNL. Residues 273–340 are Extracellular-facing; the sequence is KNKCIKRSTD…PDFNYTSFDS (68 aa). A disulfide bridge connects residues Cys-276 and Cys-318. Asn-288, Asn-311, and Asn-334 each carry an N-linked (GlcNAc...) asparagine glycan. The pore-forming intramembrane region spans 341–365; sequence FAWAFLSLFRLMTQDSWERLYQQTL. Residues 366–372 are Extracellular-facing; the sequence is RASGKMY. A helical transmembrane segment spans residues 373 to 398; that stretch reads MVFFVLVIFLGSFYLVNLILAVVTMA. At 399 to 659 the chain is on the cytoplasmic side; the sequence is YEEQNQATIA…KWMKFKMVLF (261 aa). Phosphoserine is present on residues Ser-440, Ser-443, Ser-466, and Ser-478. 2 disordered regions span residues 442–484 and 510–578; these read HSHN…YNQR and SQDV…ELTT. Positions 475–484 are enriched in polar residues; that stretch reads SPQSDPYNQR. Residues 523-533 are compositionally biased toward basic and acidic residues; that stretch reads GVFHGDHESHR. A phosphoserine mark is found at Ser-612 and Ser-615. An II repeat occupies 647–911; sequence CCPKWMKFKM…EDDGEVNNLQ (265 aa). The chain crosses the membrane as a helical span at residues 660 to 684; that stretch reads ELVTDPFAELTITLCIVVNTIFMAM. Over 685 to 695 the chain is Extracellular; it reads EHYPMTDAFDA. A helical membrane pass occupies residues 696 to 719; it reads MLQAGNIVFTVFFTMEMAFKIIAF. Residues 720–727 lie on the Cytoplasmic side of the membrane; the sequence is DPYYYFQK. The chain crosses the membrane as a helical span at residues 728–747; sequence KWNVFDCVIVTVSLLELSIA. Over 748–753 the chain is Extracellular; the sequence is KKGSLS. A helical; Voltage-sensor membrane pass occupies residues 754–773; that stretch reads VLRTFRLLRVFKLAKSWPTL. The Cytoplasmic portion of the chain corresponds to 774 to 789; it reads NTLIKIIGNSVGALGN. Residues 790 to 810 form a helical membrane-spanning segment; sequence LTFILAIIVFIFALVGKQLLG. Topologically, residues 811–834 are extracellular; sequence EDYGCRKDGTALWNEGQLRWHMCD. Positions 835–855 form an intramembrane region, pore-forming; it reads FFHSFLVIFRILCGEWIENMW. Over 856–864 the chain is Extracellular; the sequence is VCMQVSEKS. Cys-857 and Cys-866 form a disulfide bridge. A helical membrane pass occupies residues 865–890; it reads ICLILFLTVMVLGNLVVLNLFIALLL. Over 891–1149 the chain is Cytoplasmic; it reads NSFSADNLTA…GWQVRKTCYR (259 aa). Residues 1004 to 1016 show a composition bias toward acidic residues; that stretch reads GESDLDELEEDIE. Disordered regions lie at residues 1004–1034 and 1071–1097; these read GESD…QQDQ and ATPQ…PDPE. Residues 1142–1451 form an III repeat; it reads QVRKTCYRIV…KKYYNAMKKL (310 aa). A helical transmembrane segment spans residues 1150–1173; the sequence is IVEHSWFESFIIFMILLSSGALAF. Residues 1174-1186 are Extracellular-facing; sequence EDNYLEQKPRVKS. A helical membrane pass occupies residues 1187–1212; the sequence is MLEYTDRVFTFIFVFEMLLKWVAYGF. Over 1213–1218 the chain is Cytoplasmic; it reads KKYFTN. Residues 1219–1240 form a helical membrane-spanning segment; that stretch reads AWCWLDFLIVNISLTSLIAKIL. Over 1241–1244 the chain is Extracellular; it reads DYSD. A helical; Voltage-sensor membrane pass occupies residues 1245–1266; the sequence is VASLKALRTLRALRPLRALSRF. The Cytoplasmic segment spans residues 1267 to 1285; that stretch reads EGMRVVVDALVGAIPSIMN. The chain crosses the membrane as a helical span at residues 1286–1313; it reads VLLVCLIFWLIFSIMGVNLFAGKFSRCI. Over 1314–1355 the chain is Extracellular; sequence DTSNNPFSVVNSTIVNNKSECRNQNHTGHFFWVNVKVNFDNV. Residues 1356 to 1377 constitute an intramembrane region (pore-forming); that stretch reads AMGYLALLQVATFKGWMDIMYA. Residues 1378–1393 lie on the Extracellular side of the membrane; the sequence is AVDSREINSQPQWEDN. Residues 1394–1420 form a helical membrane-spanning segment; that stretch reads LYMYLYFVVFIIFGGFFTLNLFVGVII. The Cytoplasmic portion of the chain corresponds to 1421 to 1473; sequence DNFNQQKKKLGGQDIFMTEEQKKYYNAMKKLGSKKPQKPIPRPLNKYQGFVFD. Phosphoserine; by PKC is present on Ser-1453. One copy of the IV repeat lies at 1460-1759; it reads IPRPLNKYQG…WEKFDPEATQ (300 aa). The helical transmembrane segment at 1474–1497 threads the bilayer; the sequence is IVTRQAFDIIIMVLICLNMITMMV. Topologically, residues 1498 to 1508 are extracellular; the sequence is ETDGQSEEKTK. The helical transmembrane segment at 1509-1532 threads the bilayer; sequence ILGRINQFFVAVFTGECVMKMFAL. The Cytoplasmic segment spans residues 1533 to 1538; that stretch reads RQYYFT. The helical transmembrane segment at 1539–1562 threads the bilayer; it reads NGWNVFDFIVVILSIGSLVFSAIL. Residues 1563-1574 are Extracellular-facing; it reads KSLESYFSPTLF. A helical; Voltage-sensor transmembrane segment spans residues 1575-1596; that stretch reads RVIRLARIGRILRLIRAAKGIR. At 1597-1611 the chain is on the cytoplasmic side; it reads TLLFALMMSLPALFN. A helical membrane pass occupies residues 1612–1634; it reads IGLLLFLVMFIYSIFGMASFANV. The Extracellular portion of the chain corresponds to 1635-1648; it reads VEEAGIDDMFNFQT. Residues 1649–1671 constitute an intramembrane region (pore-forming); sequence FGNSMLCLFQITTSAGWDGLLSP. The Extracellular portion of the chain corresponds to 1672–1699; the sequence is ILNTGPPYCDPNLSNNNTSKGNCGSPTV. A helical transmembrane segment spans residues 1700–1724; it reads GIVFFTTYIIISFLIVVNMYIAVIL. The Cytoplasmic portion of the chain corresponds to 1725-1959; sequence ENFNVATEES…SKEGDSPGPQ (235 aa). The 30-residue stretch at 1853–1882 folds into the IQ domain; that stretch reads EDISATVIQKAYRSYVLQRSLTLSNPLRVP. Residues 1901 to 1959 are disordered; sequence ANDSGRLPDKSETTSATSFPPSYDSVTRGLSDRVNISTSNSMHNEDEVTSKEGDSPGPQ. A compositionally biased stretch (basic and acidic residues) spans 1943–1959; that stretch reads HNEDEVTSKEGDSPGPQ.

The protein belongs to the sodium channel (TC 1.A.1.10) family. Nav1.8/SCN10A subfamily. As to quaternary structure, the channel consists of an ion conducting pore forming alpha-subunit regulated by one or more associated auxiliary subunits SCN1B, SCN2B and SCN3B; electrophysiological properties may vary depending on the type of the associated beta subunits. Found in a number of complexes with PRX, DYNLT1 and PDZD2. Interacts with proteins such as FSTL1, PRX, DYNLT1, PDZD2, S100A10 and many others. Interacts with NEDD4 and NEDD4L. Ubiquitinated by NEDD4L; which promotes its endocytosis. In terms of processing, phosphorylation at Ser-1453 by PKC in a highly conserved cytoplasmic loop slows inactivation of the sodium channel and reduces peak sodium currents. Post-translationally, lacks the cysteine which covalently binds the conotoxin GVIIJ. This cysteine (position 816) is speculated in other sodium channel subunits alpha to be implied in covalent binding with the sodium channel subunit beta-2 or beta-4.

Its subcellular location is the cell membrane. The catalysed reaction is Na(+)(in) = Na(+)(out). In terms of biological role, tetrodotoxin-resistant channel that mediates the voltage-dependent sodium ion permeability of excitable membranes. Assuming opened or closed conformations in response to the voltage difference across the membrane, the protein forms a sodium-selective channel through which sodium ions may pass in accordance with their electrochemical gradient. Plays a role in neuropathic pain mechanisms. In Onychomys torridus (Southern grasshopper mouse), this protein is Sodium channel protein type 10 subunit alpha (Scn10a).